A 562-amino-acid chain; its full sequence is T-complex protein 1 subunit epsilon (562 aa).

The protein belongs to the TCP-1 chaperonin family. As to quaternary structure, heterooligomeric complex of about 850 to 900 kDa that forms two stacked rings, 12 to 16 nm in diameter.

The protein resides in the cytoplasm. Molecular chaperone; assists the folding of proteins upon ATP hydrolysis. Known to play a role, in vitro, in the folding of actin and tubulin. In yeast may play a role in mitotic spindle formation. This chain is T-complex protein 1 subunit epsilon (CCT5), found in Saccharomyces cerevisiae (strain ATCC 204508 / S288c) (Baker's yeast).